A 547-amino-acid polypeptide reads, in one-letter code: Probable bifunctional tRNA threonylcarbamoyladenosine biosynthesis protein (547 aa).

Residues 1–329 (MGNSNELICI…FRTDMVDVNW (329 aa)) are kae1. The Fe cation site is built by His-112, His-116, and Tyr-133. L-threonylcarbamoyladenylate contacts are provided by residues 133–137 (YVSGG), Asp-165, Gly-178, Glu-182, and Asn-262. A Fe cation-binding site is contributed by Asp-290. The Protein kinase domain maps to 346-547 (QIPRHLIGKG…KEVEKRGRYL (202 aa)). ATP contacts are provided by residues 352–360 (IGKGAEADI) and Lys-373. Asp-465 (proton acceptor; for kinase activity) is an active-site residue.

The protein in the N-terminal section; belongs to the KAE1 / TsaD family. This sequence in the C-terminal section; belongs to the protein kinase superfamily. Tyr protein kinase family. BUD32 subfamily. In terms of assembly, component of the KEOPS complex that consists of Kae1, Bud32, Cgi121 and Pcc1; the whole complex dimerizes. Fe(2+) serves as cofactor.

It is found in the cytoplasm. It catalyses the reaction L-seryl-[protein] + ATP = O-phospho-L-seryl-[protein] + ADP + H(+). The enzyme catalyses L-threonyl-[protein] + ATP = O-phospho-L-threonyl-[protein] + ADP + H(+). It carries out the reaction L-threonylcarbamoyladenylate + adenosine(37) in tRNA = N(6)-L-threonylcarbamoyladenosine(37) in tRNA + AMP + H(+). In terms of biological role, required for the formation of a threonylcarbamoyl group on adenosine at position 37 (t(6)A37) in tRNAs that read codons beginning with adenine. Is a component of the KEOPS complex that is probably involved in the transfer of the threonylcarbamoyl moiety of threonylcarbamoyl-AMP (TC-AMP) to the N6 group of A37. The Kae1 domain likely plays a direct catalytic role in this reaction. The Bud32 domain probably displays kinase activity that regulates Kae1 function. In Methanococcus vannielii (strain ATCC 35089 / DSM 1224 / JCM 13029 / OCM 148 / SB), this protein is Probable bifunctional tRNA threonylcarbamoyladenosine biosynthesis protein.